The chain runs to 348 residues: Probable dual-specificity RNA methyltransferase RlmN (348 aa).

E95 serves as the catalytic Proton acceptor. The region spanning 101-335 (SGNRLTICVS…VSLRASRGLD (235 aa)) is the Radical SAM core domain. A disulfide bridge connects residues C108 and C340. [4Fe-4S] cluster is bound by residues C115, C119, and C122. S-adenosyl-L-methionine is bound by residues 162 to 163 (GE), S192, 221 to 223 (SLH), and N297. C340 serves as the catalytic S-methylcysteine intermediate.

The protein belongs to the radical SAM superfamily. RlmN family. The cofactor is [4Fe-4S] cluster.

The protein localises to the cytoplasm. The catalysed reaction is adenosine(2503) in 23S rRNA + 2 reduced [2Fe-2S]-[ferredoxin] + 2 S-adenosyl-L-methionine = 2-methyladenosine(2503) in 23S rRNA + 5'-deoxyadenosine + L-methionine + 2 oxidized [2Fe-2S]-[ferredoxin] + S-adenosyl-L-homocysteine. The enzyme catalyses adenosine(37) in tRNA + 2 reduced [2Fe-2S]-[ferredoxin] + 2 S-adenosyl-L-methionine = 2-methyladenosine(37) in tRNA + 5'-deoxyadenosine + L-methionine + 2 oxidized [2Fe-2S]-[ferredoxin] + S-adenosyl-L-homocysteine. Specifically methylates position 2 of adenine 2503 in 23S rRNA and position 2 of adenine 37 in tRNAs. In Prochlorococcus marinus (strain SARG / CCMP1375 / SS120), this protein is Probable dual-specificity RNA methyltransferase RlmN.